The sequence spans 337 residues: Ornithine carbamoyltransferase (337 aa).

Carbamoyl phosphate is bound by residues Ser57 to Thr60, Gln84, Arg108, and His135 to Gln138. L-ornithine contacts are provided by residues Asn167, Asp231, and Ser235–Met236. Carbamoyl phosphate-binding positions include Cys272–Leu273 and Arg317.

This sequence belongs to the aspartate/ornithine carbamoyltransferase superfamily. OTCase family.

It is found in the cytoplasm. The catalysed reaction is carbamoyl phosphate + L-ornithine = L-citrulline + phosphate + H(+). Its pathway is amino-acid degradation; L-arginine degradation via ADI pathway; carbamoyl phosphate from L-arginine: step 2/2. Functionally, reversibly catalyzes the transfer of the carbamoyl group from carbamoyl phosphate (CP) to the N(epsilon) atom of ornithine (ORN) to produce L-citrulline. This is Ornithine carbamoyltransferase from Streptococcus equi subsp. equi (strain 4047).